A 605-amino-acid chain; its full sequence is Insulin-like growth factor-binding protein complex acid labile subunit (605 aa).

A signal peptide spans 1–27 (MALRKGGLALALLLLSWVALGPRSLEG). The region spanning 32–74 (TPGEAEGPACPATCACSYDDEVNELSVFCSSRNLTRLPDGIPG) is the LRRNT domain. Disulfide bonds link cysteine 41–cysteine 47 and cysteine 45–cysteine 60. N-linked (GlcNAc...) asparagine glycosylation is found at asparagine 64, asparagine 85, and asparagine 96. LRR repeat units lie at residues 75-96 (GTQALWLDSNNLSSIPPAAFRN), 99-120 (SLAFLNLQGGQLGSLEPQALLG), 123-144 (NLCHLHLERNQLRSLAVGTFAY), 147-168 (ALALLGLSNNRLSRLEDGLFEG), 171-192 (NLWDLNLGWNSLAVLPDAAFRG), 195-216 (GLRELVLAGNRLAYLQPALFSG), 219-240 (ELRELDLSRNALRAIKANVFAQ), 243-264 (RLQKLYLDRNLIAAVAPGAFLG), 267-288 (ALRWLDLSHNRVAGLLEDTFPG), 291-312 (GLRVLRLSHNAIASLRPRTFED), 315-336 (FLEELQLGHNRIRQLAERSFEG), 339-360 (QLEVLTLDHNQLQEVKVGAFLG), 363-384 (NVAVMNLSGNCLRNLPEQVFRG), 387-408 (KLHSLHLEGSCLGRIRPHTFAG), 411-432 (GLRRLFLKDNGLVGIEEQSLWG), 435-456 (ELLELDLTSNQLTHLPHQLFQG), 459-480 (KLEYLLLSHNRLAELPADALGP), 483-504 (RAFWLDVSHNRLEALPGSLLAS), and 507-528 (RLRYLNLRNNSLRTFTPQPPGL). N-linked (GlcNAc...) asparagine glycosylation is present at asparagine 368. A glycan (N-linked (GlcNAc...) asparagine) is linked at asparagine 515. Residues 536 to 605 (NPWDCSCPLK…DLGEAHFAPC (70 aa)) enclose the LRRCT domain. Intrachain disulfides connect cysteine 540-cysteine 583, cysteine 542-cysteine 605, and cysteine 566-cysteine 571. Asparagine 580 carries N-linked (GlcNAc...) asparagine glycosylation.

In terms of assembly, forms a ternary complex with IGF1 and IGFBP3.

The protein resides in the secreted. It is found in the extracellular space. In terms of biological role, involved in protein-protein interactions that result in protein complexes, receptor-ligand binding or cell adhesion. The chain is Insulin-like growth factor-binding protein complex acid labile subunit (IGFALS) from Papio hamadryas (Hamadryas baboon).